Reading from the N-terminus, the 86-residue chain is Small ribosomal subunit protein bS16 (86 aa).

This sequence belongs to the bacterial ribosomal protein bS16 family.

The protein is Small ribosomal subunit protein bS16 of Bordetella avium (strain 197N).